The chain runs to 442 residues: 26S proteasome regulatory subunit 6A (442 aa).

Residue Ser-12 is modified to Phosphoserine. ATP is bound at residue 230 to 237 (GPPGTGKT). Residue Ser-379 is modified to Phosphoserine.

Belongs to the AAA ATPase family. Component of the 19S proteasome regulatory particle complex. The 26S proteasome consists of a 20S core particle (CP) and two 19S regulatory subunits (RP). The regulatory particle is made of a lid composed of 9 subunits, a base containing 6 ATPases including PSMC3 and few additional components. Interacts with PAAF1.

It is found in the cytoplasm. The protein localises to the nucleus. Its function is as follows. Component of the 26S proteasome, a multiprotein complex involved in the ATP-dependent degradation of ubiquitinated proteins. This complex plays a key role in the maintenance of protein homeostasis by removing misfolded or damaged proteins, which could impair cellular functions, and by removing proteins whose functions are no longer required. Therefore, the proteasome participates in numerous cellular processes, including cell cycle progression, apoptosis, or DNA damage repair. PSMC3 belongs to the heterohexameric ring of AAA (ATPases associated with diverse cellular activities) proteins that unfolds ubiquitinated target proteins that are concurrently translocated into a proteolytic chamber and degraded into peptides. This Mus musculus (Mouse) protein is 26S proteasome regulatory subunit 6A (Psmc3).